The sequence spans 313 residues: MPVKIPDHLPAAGILESENIFVMSETRAANQDIRPMKVLILNLMPNKIETETQLLRLLGNTPLQVDVDLLRIHDKESKHTSIDHMNTFYRDFEDVRHKNYDGLIITGAPLGQIDFEEVTYWDHIREIIDWSQQHVTSVLFLCWAAHAGLYHLYGLNRKILQQKRSGVFVHRRTCQHFPLLRGFDDEFFAPHSRFAEMDIEELKQHPELQVLAESDEAGAYLVLSRNNRNLFVMGHPEYQKSTLNDEYHRDLAQGLNPNVPQNYYRNDDPQADAIARWHSHGSLLVSNWLNYYVYQLTPYDLSDMTAMTPWESQ.

Catalysis depends on cysteine 142, which acts as the Acyl-thioester intermediate. Substrate contacts are provided by lysine 163 and serine 192. The active-site Proton acceptor is the histidine 235. Residue glutamate 237 is part of the active site. Arginine 249 is a binding site for substrate.

This sequence belongs to the MetA family.

It localises to the cytoplasm. It catalyses the reaction L-homoserine + succinyl-CoA = O-succinyl-L-homoserine + CoA. It participates in amino-acid biosynthesis; L-methionine biosynthesis via de novo pathway; O-succinyl-L-homoserine from L-homoserine: step 1/1. Transfers a succinyl group from succinyl-CoA to L-homoserine, forming succinyl-L-homoserine. The polypeptide is Homoserine O-succinyltransferase (Shewanella sp. (strain MR-4)).